Here is a 256-residue protein sequence, read N- to C-terminus: MPAPLNTFKKSLSEGETLFGCWMSIAESYTAEILGNAGFDWLLIDGEHSPNDVRSIRDQMIALKSSDSHPIIRVPVGETWIIKQMLDLGAQTILVPMVETAEQAQELVRACRYPPEGRRGVGYAVGRASGFGQIDNYGPTADAQTCLLVQVENKTGLYNLDAILAVDGVDGVFIGPADLSASLGYLGQTMHPDIQATILKTIKRISDSGKAAGILTTDDGMIQASLDAGARFVAVAMDIAMLLNTGKSIAAKWKQG.

His-48 functions as the Proton acceptor in the catalytic mechanism. A divalent metal cation is bound by residues Glu-152 and Asp-178.

The protein belongs to the HpcH/HpaI aldolase family. A divalent metal cation serves as cofactor.

The enzyme catalyses D-glyceraldehyde + pyruvate = 2-dehydro-3-deoxy-L-galactonate. Aldolase which can catalyze in vitro the aldolisation reaction between hydroxypyruvate (HPA) or pyruvate (PA) and D-glyceraldehyde (D-GA). The condensation of pyruvate and D-glyceraldehyde produces 2-dehydro-3-deoxy-L-galactonate as the major product. Has weak activity with hydroxypyruvate and D-glyceraldehyde. The sequence is that of Hydroxypyruvate/pyruvate aldolase from Roseobacter denitrificans (strain ATCC 33942 / OCh 114) (Erythrobacter sp. (strain OCh 114)).